The following is a 422-amino-acid chain: Probable isoprenylcysteine alpha-carbonyl methylesterase ICMEL2 (422 aa).

Residues 1–16 show a composition bias toward basic and acidic residues; sequence MQLSPERCRPMSENRE. Positions 1-55 are disordered; sequence MQLSPERCRPMSENREAWSANSEEMELLHGSNRLSSPEHVRRRVSGNSSEDGSPR. The next 2 membrane-spanning stretches (helical) occupy residues 97–117 and 152–172; these read LLAL…VAYL and VVVF…GSLL. Substrate is bound by residues 158–160 and 229–231; these read GGA and QSA. Catalysis depends on residues Ser-230, Asp-331, and His-363.

Belongs to the AB hydrolase superfamily. Isoprenylcysteine methylesterase family. As to expression, expressed at low levels in flowers and siliques.

Its subcellular location is the endoplasmic reticulum membrane. It localises to the golgi apparatus membrane. It catalyses the reaction [protein]-C-terminal S-[(2E,6E)-farnesyl]-L-cysteine methyl ester + H2O = [protein]-C-terminal S-[(2E,6E)-farnesyl]-L-cysteine + methanol + H(+). In terms of biological role, catalyzes the demethylation of isoprenylcysteine methylesters. May act as a negative regulator of ABA signaling. The sequence is that of Probable isoprenylcysteine alpha-carbonyl methylesterase ICMEL2 from Arabidopsis thaliana (Mouse-ear cress).